The chain runs to 152 residues: Transcription elongation factor Spt5 (152 aa).

In terms of domain architecture, KOW spans 98-127 (EGDLVEVVSGPFRGMQAQVVKVTEGKGEVV).

It belongs to the archaeal Spt5 family. Heterodimer composed of Spt4 and Spt5. Interacts with RNA polymerase (RNAP).

Stimulates transcription elongation. The sequence is that of Transcription elongation factor Spt5 from Acidianus ambivalens (Desulfurolobus ambivalens).